Consider the following 176-residue polypeptide: MTKEWISLGQLGKPFGIKGWLRLNVRETVLCELKTPISLKLSKPDFHFPEKEITLLEIRPHGGKFIVRFEGVTTPEEAAKWIGGFLFLPQKLLPKIETKNEFYITDLIGLQAIDESGKKLDWKLKDVQDNPAHPILVFVKENGEEILIPFLQVFVGDLDLEKNTIVLIQPEIWNEI.

The PRC barrel domain maps to 99-174; that stretch reads KNEFYITDLI…IVLIQPEIWN (76 aa).

It belongs to the RimM family. As to quaternary structure, binds ribosomal protein uS19.

It is found in the cytoplasm. Its function is as follows. An accessory protein needed during the final step in the assembly of 30S ribosomal subunit, possibly for assembly of the head region. Essential for efficient processing of 16S rRNA. May be needed both before and after RbfA during the maturation of 16S rRNA. It has affinity for free ribosomal 30S subunits but not for 70S ribosomes. The sequence is that of Ribosome maturation factor RimM from Leptospira interrogans serogroup Icterohaemorrhagiae serovar copenhageni (strain Fiocruz L1-130).